The chain runs to 100 residues: UPF0213 protein CKO_04549 (100 aa).

The GIY-YIG domain maps to 2–77; that stretch reads TPWYLYLIRT…KRLTKRQKER (76 aa).

This sequence belongs to the UPF0213 family.

This chain is UPF0213 protein CKO_04549, found in Citrobacter koseri (strain ATCC BAA-895 / CDC 4225-83 / SGSC4696).